Here is a 138-residue protein sequence, read N- to C-terminus: Ribosome-binding factor A (138 aa).

The segment at 119-138 is disordered; the sequence is RSPEVQRDLGPSNEKDDEQN.

Belongs to the RbfA family. In terms of assembly, monomer. Binds 30S ribosomal subunits, but not 50S ribosomal subunits or 70S ribosomes.

It localises to the cytoplasm. One of several proteins that assist in the late maturation steps of the functional core of the 30S ribosomal subunit. Associates with free 30S ribosomal subunits (but not with 30S subunits that are part of 70S ribosomes or polysomes). Required for efficient processing of 16S rRNA. May interact with the 5'-terminal helix region of 16S rRNA. The protein is Ribosome-binding factor A of Agrobacterium fabrum (strain C58 / ATCC 33970) (Agrobacterium tumefaciens (strain C58)).